The sequence spans 167 residues: Histidinol dehydrogenase (167 aa).

Zn(2+) is bound by residues Gln109 and His112.

It belongs to the histidinol dehydrogenase family. Homodimer. It depends on Zn(2+) as a cofactor.

The catalysed reaction is L-histidinol + 2 NAD(+) + H2O = L-histidine + 2 NADH + 3 H(+). The protein operates within amino-acid biosynthesis; L-histidine biosynthesis; L-histidine from 5-phospho-alpha-D-ribose 1-diphosphate: step 9/9. In terms of biological role, catalyzes the sequential NAD-dependent oxidations of L-histidinol to L-histidinaldehyde and then to L-histidine. This chain is Histidinol dehydrogenase (hisD), found in Salmonella enteritidis.